The primary structure comprises 85 residues: UPF0297 protein Clos_1665 (85 aa).

This sequence belongs to the UPF0297 family.

The sequence is that of UPF0297 protein Clos_1665 from Alkaliphilus oremlandii (strain OhILAs) (Clostridium oremlandii (strain OhILAs)).